Here is a 422-residue protein sequence, read N- to C-terminus: uncharacterized protein (422 aa).

A signal peptide spans 1 to 23; it reads MLSLIPFTVCAFLALITSKGGSA.

As to expression, component of the acid-insoluble organic matrix of the aragonitic skeleton (at protein level).

Its subcellular location is the secreted. This is an uncharacterized protein from Acropora millepora (Staghorn coral).